Here is a 328-residue protein sequence, read N- to C-terminus: Telomere-binding protein cav (328 aa).

The segment at 107 to 320 is required for binding to Su(var)205; it reads RRKMVQPYPE…NISLQNSGSE (214 aa). A disordered region spans residues 139–228; it reads DRWQKQKSQN…EFQTEHTDCP (90 aa). Composition is skewed to polar residues over residues 144–167 and 180–189; these read QKSQ…QQDS and ANTNRYSVSQ. Short sequence motifs (su(var)205-binding Pro-containing repeat) lie at residues 228 to 232 and 281 to 287; these read PETQM and PETETNE. Residues 295-319 show a composition bias toward polar residues; it reads INSESMSIGPSIDSEGNISLQNSGS. The disordered stretch occupies residues 295–328; it reads INSESMSIGPSIDSEGNISLQNSGSEPIDVDSMA.

Interacts (via C-terminus) with Su(var)205 dimer (via hinge and chromoshadow domain) and with moi to form the terminin, telomere-capping, complex. Interacts with HP6, which is also part of the terminin complex.

The protein resides in the nucleus. It localises to the chromosome. It is found in the telomere. Binds to chromosome ends in a sequence-dependent manner and is required for telomere capping. The sequence is that of Telomere-binding protein cav from Drosophila erecta (Fruit fly).